Reading from the N-terminus, the 369-residue chain is Maltose/maltodextrin import ATP-binding protein MalK (369 aa).

The region spanning 4-234 (VTLHNVSKAY…PVNRFVASFI (231 aa)) is the ABC transporter domain. 36–43 (GPSGCGKS) serves as a coordination point for ATP.

Belongs to the ABC transporter superfamily. Maltooligosaccharide importer (TC 3.A.1.1.1) family. As to quaternary structure, the complex is composed of two ATP-binding proteins (MalK), two transmembrane proteins (MalG and MalK) and a solute-binding protein (MalE).

The protein resides in the cell inner membrane. The catalysed reaction is D-maltose(out) + ATP + H2O = D-maltose(in) + ADP + phosphate + H(+). Functionally, part of the ABC transporter complex MalEFGK involved in maltose/maltodextrin import. Responsible for energy coupling to the transport system. The polypeptide is Maltose/maltodextrin import ATP-binding protein MalK (Photorhabdus laumondii subsp. laumondii (strain DSM 15139 / CIP 105565 / TT01) (Photorhabdus luminescens subsp. laumondii)).